A 96-amino-acid chain; its full sequence is Co-chaperonin GroES (96 aa).

This sequence belongs to the GroES chaperonin family. In terms of assembly, heptamer of 7 subunits arranged in a ring. Interacts with the chaperonin GroEL.

The protein localises to the cytoplasm. Functionally, together with the chaperonin GroEL, plays an essential role in assisting protein folding. The GroEL-GroES system forms a nano-cage that allows encapsulation of the non-native substrate proteins and provides a physical environment optimized to promote and accelerate protein folding. GroES binds to the apical surface of the GroEL ring, thereby capping the opening of the GroEL channel. The chain is Co-chaperonin GroES from Paraburkholderia phymatum (strain DSM 17167 / CIP 108236 / LMG 21445 / STM815) (Burkholderia phymatum).